The following is a 93-amino-acid chain: UPF0473 protein YrzB (93 aa).

It belongs to the UPF0473 family.

This chain is UPF0473 protein YrzB (yrzB), found in Bacillus subtilis (strain 168).